Reading from the N-terminus, the 151-residue chain is Ribosome maturation factor RimP (151 aa).

This sequence belongs to the RimP family.

It localises to the cytoplasm. In terms of biological role, required for maturation of 30S ribosomal subunits. The polypeptide is Ribosome maturation factor RimP (Shewanella denitrificans (strain OS217 / ATCC BAA-1090 / DSM 15013)).